The sequence spans 86 residues: Large ribosomal subunit protein bL27 (86 aa).

The tract at residues 1-22 (MATKKAGGSSRNGRDSAGRRLG) is disordered.

Belongs to the bacterial ribosomal protein bL27 family.

The polypeptide is Large ribosomal subunit protein bL27 (Rickettsia bellii (strain RML369-C)).